The primary structure comprises 115 residues: NADH-ubiquinone oxidoreductase chain 3 (115 aa).

Helical transmembrane passes span leucine 4–leucine 24, phenylalanine 55–leucine 75, and isoleucine 84–tyrosine 104.

Belongs to the complex I subunit 3 family. Core subunit of respiratory chain NADH dehydrogenase (Complex I) which is composed of 45 different subunits. Interacts with TMEM186. Interacts with TMEM242.

The protein localises to the mitochondrion membrane. The enzyme catalyses a ubiquinone + NADH + 5 H(+)(in) = a ubiquinol + NAD(+) + 4 H(+)(out). In terms of biological role, core subunit of the mitochondrial membrane respiratory chain NADH dehydrogenase (Complex I) that is believed to belong to the minimal assembly required for catalysis. Complex I functions in the transfer of electrons from NADH to the respiratory chain. The immediate electron acceptor for the enzyme is believed to be ubiquinone. The polypeptide is NADH-ubiquinone oxidoreductase chain 3 (Onychomys leucogaster (Northern grasshopper mouse)).